The sequence spans 166 residues: MDKLINDFSFGLFFWQALILVILILLLVKFAWKPIMESITAREEGIKNALLSAENAKREMENLQADNQRILNEARAERDAMLKEAREMKEKMIADSKNEAQEAGQKMIEQAKAAIESEKNAAMAELKSQVSTLSLSIAEKLLKEELSNKESQTKLVEKMLGDVKLN.

Residues 8-28 traverse the membrane as a helical segment; the sequence is FSFGLFFWQALILVILILLLV.

The protein belongs to the ATPase B chain family. In terms of assembly, F-type ATPases have 2 components, F(1) - the catalytic core - and F(0) - the membrane proton channel. F(1) has five subunits: alpha(3), beta(3), gamma(1), delta(1), epsilon(1). F(0) has three main subunits: a(1), b(2) and c(10-14). The alpha and beta chains form an alternating ring which encloses part of the gamma chain. F(1) is attached to F(0) by a central stalk formed by the gamma and epsilon chains, while a peripheral stalk is formed by the delta and b chains.

The protein resides in the cell inner membrane. Functionally, f(1)F(0) ATP synthase produces ATP from ADP in the presence of a proton or sodium gradient. F-type ATPases consist of two structural domains, F(1) containing the extramembraneous catalytic core and F(0) containing the membrane proton channel, linked together by a central stalk and a peripheral stalk. During catalysis, ATP synthesis in the catalytic domain of F(1) is coupled via a rotary mechanism of the central stalk subunits to proton translocation. In terms of biological role, component of the F(0) channel, it forms part of the peripheral stalk, linking F(1) to F(0). The chain is ATP synthase subunit b from Flavobacterium johnsoniae (strain ATCC 17061 / DSM 2064 / JCM 8514 / BCRC 14874 / CCUG 350202 / NBRC 14942 / NCIMB 11054 / UW101) (Cytophaga johnsonae).